The chain runs to 264 residues: 3-methyl-2-oxobutanoate hydroxymethyltransferase (264 aa).

Residues aspartate 45 and aspartate 84 each coordinate Mg(2+). 3-methyl-2-oxobutanoate contacts are provided by residues 45 to 46 (DS), aspartate 84, and lysine 112. Glutamate 114 contributes to the Mg(2+) binding site. Glutamate 181 functions as the Proton acceptor in the catalytic mechanism.

This sequence belongs to the PanB family. Homodecamer; pentamer of dimers. Mg(2+) is required as a cofactor.

It is found in the cytoplasm. It catalyses the reaction 3-methyl-2-oxobutanoate + (6R)-5,10-methylene-5,6,7,8-tetrahydrofolate + H2O = 2-dehydropantoate + (6S)-5,6,7,8-tetrahydrofolate. It functions in the pathway cofactor biosynthesis; (R)-pantothenate biosynthesis; (R)-pantoate from 3-methyl-2-oxobutanoate: step 1/2. Its function is as follows. Catalyzes the reversible reaction in which hydroxymethyl group from 5,10-methylenetetrahydrofolate is transferred onto alpha-ketoisovalerate to form ketopantoate. This is 3-methyl-2-oxobutanoate hydroxymethyltransferase from Cronobacter sakazakii (strain ATCC BAA-894) (Enterobacter sakazakii).